Consider the following 110-residue polypeptide: Insulin (110 aa).

The first 24 residues, 1–24, serve as a signal peptide directing secretion; that stretch reads MALWMRLLPLLALLALWGPDPVPA. Cystine bridges form between Cys-31–Cys-96, Cys-43–Cys-109, and Cys-95–Cys-100. Residues 57–87 constitute a propeptide, c peptide; sequence EAEDPQVGQVELGGGPGAGSLQPLALEGSLQ.

It belongs to the insulin family. Heterodimer of a B chain and an A chain linked by two disulfide bonds.

Its subcellular location is the secreted. Functionally, insulin decreases blood glucose concentration. It increases cell permeability to monosaccharides, amino acids and fatty acids. It accelerates glycolysis, the pentose phosphate cycle, and glycogen synthesis in liver. The sequence is that of Insulin (INS) from Chlorocebus aethiops (Green monkey).